We begin with the raw amino-acid sequence, 296 residues long: Co-chaperone protein DjlA (296 aa).

Residues 1-15 (MNLRDFFVITTWWGK) are Periplasmic-facing. A helical membrane pass occupies residues 16 to 39 (ILGAFFGYLTAGPVGALFGILVGN). Topologically, residues 40–296 (FFDRGLVSYY…YELICETKGW (257 aa)) are cytoplasmic. Positions 200–225 (QHYHNQQEYKHTSSSQGQQGYKPQSP) are disordered. Over residues 211-221 (TSSSQGQQGYK) the composition is skewed to polar residues. The J domain maps to 231-296 (HAFALLEVSP…YELICETKGW (66 aa)).

In terms of assembly, homodimer.

It localises to the cell inner membrane. Regulatory DnaK co-chaperone. Direct interaction between DnaK and DjlA is needed for the induction of the wcaABCDE operon, involved in the synthesis of a colanic acid polysaccharide capsule, possibly through activation of the RcsB/RcsC phosphotransfer signaling pathway. The colanic acid capsule may help the bacterium survive conditions outside the host. The protein is Co-chaperone protein DjlA of Legionella pneumophila subsp. pneumophila (strain Philadelphia 1 / ATCC 33152 / DSM 7513).